A 312-amino-acid polypeptide reads, in one-letter code: Lipoyl synthase (312 aa).

[4Fe-4S] cluster contacts are provided by C51, C56, C62, C77, C81, C84, and S290. A Radical SAM core domain is found at 63–280 (WSRKTATYLA…RTIGTSLGLF (218 aa)).

It belongs to the radical SAM superfamily. Lipoyl synthase family. Requires [4Fe-4S] cluster as cofactor.

The protein localises to the cytoplasm. The catalysed reaction is [[Fe-S] cluster scaffold protein carrying a second [4Fe-4S](2+) cluster] + N(6)-octanoyl-L-lysyl-[protein] + 2 oxidized [2Fe-2S]-[ferredoxin] + 2 S-adenosyl-L-methionine + 4 H(+) = [[Fe-S] cluster scaffold protein] + N(6)-[(R)-dihydrolipoyl]-L-lysyl-[protein] + 4 Fe(3+) + 2 hydrogen sulfide + 2 5'-deoxyadenosine + 2 L-methionine + 2 reduced [2Fe-2S]-[ferredoxin]. Its pathway is protein modification; protein lipoylation via endogenous pathway; protein N(6)-(lipoyl)lysine from octanoyl-[acyl-carrier-protein]: step 2/2. Catalyzes the radical-mediated insertion of two sulfur atoms into the C-6 and C-8 positions of the octanoyl moiety bound to the lipoyl domains of lipoate-dependent enzymes, thereby converting the octanoylated domains into lipoylated derivatives. In Chlamydia caviae (strain ATCC VR-813 / DSM 19441 / 03DC25 / GPIC) (Chlamydophila caviae), this protein is Lipoyl synthase.